The chain runs to 267 residues: Imidazole glycerol phosphate synthase subunit HisF (267 aa).

Catalysis depends on residues D21 and D140.

The protein belongs to the HisA/HisF family. Heterodimer of HisH and HisF.

It is found in the cytoplasm. The catalysed reaction is 5-[(5-phospho-1-deoxy-D-ribulos-1-ylimino)methylamino]-1-(5-phospho-beta-D-ribosyl)imidazole-4-carboxamide + L-glutamine = D-erythro-1-(imidazol-4-yl)glycerol 3-phosphate + 5-amino-1-(5-phospho-beta-D-ribosyl)imidazole-4-carboxamide + L-glutamate + H(+). It functions in the pathway amino-acid biosynthesis; L-histidine biosynthesis; L-histidine from 5-phospho-alpha-D-ribose 1-diphosphate: step 5/9. IGPS catalyzes the conversion of PRFAR and glutamine to IGP, AICAR and glutamate. The HisF subunit catalyzes the cyclization activity that produces IGP and AICAR from PRFAR using the ammonia provided by the HisH subunit. In Bordetella avium (strain 197N), this protein is Imidazole glycerol phosphate synthase subunit HisF.